Reading from the N-terminus, the 430-residue chain is Serine--tRNA ligase (430 aa).

237 to 239 lines the L-serine pocket; it reads TAE. 268 to 270 lines the ATP pocket; the sequence is RSE. Glutamate 291 is a binding site for L-serine. 355-358 lines the ATP pocket; the sequence is EISS. Serine 391 contacts L-serine.

Belongs to the class-II aminoacyl-tRNA synthetase family. Type-1 seryl-tRNA synthetase subfamily. As to quaternary structure, homodimer. The tRNA molecule binds across the dimer.

It localises to the cytoplasm. It catalyses the reaction tRNA(Ser) + L-serine + ATP = L-seryl-tRNA(Ser) + AMP + diphosphate + H(+). It carries out the reaction tRNA(Sec) + L-serine + ATP = L-seryl-tRNA(Sec) + AMP + diphosphate + H(+). It participates in aminoacyl-tRNA biosynthesis; selenocysteinyl-tRNA(Sec) biosynthesis; L-seryl-tRNA(Sec) from L-serine and tRNA(Sec): step 1/1. Its function is as follows. Catalyzes the attachment of serine to tRNA(Ser). Is also able to aminoacylate tRNA(Sec) with serine, to form the misacylated tRNA L-seryl-tRNA(Sec), which will be further converted into selenocysteinyl-tRNA(Sec). This Citrobacter koseri (strain ATCC BAA-895 / CDC 4225-83 / SGSC4696) protein is Serine--tRNA ligase.